The chain runs to 923 residues: ATP-dependent Clp protease ATP-binding subunit ClpA homolog CD4B, chloroplastic (923 aa).

In terms of domain architecture, Clp R spans 92–234; the sequence is FERFTEKAIK…RTQVIRMVGE (143 aa). Repeat stretches follow at residues 95–160 and 170–234; these read FTEK…IGRG and FTPR…MVGE. Residues 255–502 form an i region; it reads LEEYGTNLTK…RVRLRHAQLP (248 aa). An ATP-binding site is contributed by 300-307; the sequence is GEPGVGKT. The region spanning 509-544 is the UVR domain; it reads EKELRQITKEKNEAVRGQDFEKAGELRDREMDLKAQ. Residues 569 to 760 are II; that stretch reads VTEADIQHIV…LLIMTSNVGS (192 aa). 643 to 650 provides a ligand contact to ATP; the sequence is GPTGVGKS.

This sequence belongs to the ClpA/ClpB family.

The protein localises to the plastid. Its subcellular location is the chloroplast. Functionally, may interact with a ClpP-like protease involved in degradation of denatured proteins in the chloroplast. The chain is ATP-dependent Clp protease ATP-binding subunit ClpA homolog CD4B, chloroplastic (CD4B) from Solanum lycopersicum (Tomato).